The primary structure comprises 303 residues: Thioesterase poxG (303 aa).

It belongs to the lcsJ thioesterase family.

It participates in secondary metabolite biosynthesis. In terms of biological role, thioesterase; part of the gene cluster that mediates the biosynthesis of oxaleimides, cytotoxic compounds containing an unusual disubstituted succinimide moiety. The first step of the pathway is provided by the HR-PKS poxF that serves in a new mode of collaborative biosynthesis with the PKS-NRPS poxE, by providing the olefin containing amino acid substrate via the synthesis of an ACP-bound dec-4-enoate. The cytochrome P450 monooxygenase poxM-catalyzed oxidation at the alpha-position creates the enzyme-bound 2-hydroxydec-4-enoyl-ACP thioester, which may be prone to spontaneous hydrolysis to yield 2-hydroxydec-4-enoic acid due to increased electrophilicity of the carbonyl. 2-hydroxydec-4-enoic acid can then be further oxidized by poxM to yield the alpha-ketoacid 2-oxodec-4-enoicacid, which is reductively aminated by the aminotransferase poxL to yield (S,E)-2-aminodec-4-enoic acid. The Hybrid PKS-NRPS synthetase poxE then performs condensation between the octaketide product of its PKS modules and the amino group of (S,E)-2-aminodec-4-enoic acid which is activated and incorporated by the adenylation domain. The resulting aminoacyl product can be cyclized by the Diels-Alderase PoxQ and reductively released by the reductive (R) domain of poxE to yield an aldehyde intermediate. The released aldehyde is then substrate for a Knoevenagel condensation by the hydrolyase poxO followed by an oxidation at the 5-position of the pyrrolidone ring. The presence of the olefin from the amino acid building block allows for migration of the substituted allyl group to occur. This allylic transposition reaction takes place in a conjugate addition, semipinacol-like fashion to yield a succinimide intermediate. Iterative two-electron oxidations of the C7 methyl of the succinimide intermediate to the carboxylic acid can be catalyzed by one of two remaining cytochrome P450 monooxygenasess poxC or poxD to yield oxaleimide A. Subsequent oxidation yields the maleimide scaffold oxaleimide I. Both oxaleimide A and oxaleimide I can undergo oxidative modifications in the decalin ring to yield the series of products oxaleimides B to H. This is Thioesterase poxG from Penicillium oxalicum.